The sequence spans 650 residues: MSSQSLYKVSGNIAANALVNNEQYKTMYQESIVNPEGFWREHGKRIDWIKPYTKIKKTSFDDHNLSINWFYDGTLNASANCLDRHLAEHSDRVAIIWEGDNASEQRKITYGELHADVCKFANALRSQGVRRGDIVTIYMPMVPEAAVAMLACARIGAVHSVVFGGFSPDSIASRVIDGKSKVVITSDEGMRGGRAIPLKRNIDDALNHPDVTSVEKVIVLKRTGGKIDWVEGRDVWWHSLLETASEHCQPEEMGAEDPLFLLYTSGSTGNPKGVLHTTGGYMVYASMTHEYVFDYKAGEVYWCTADVGWITGHSYMVYGPLANGATVLIHEGVPNHPSPARLGEMIDRHKVNILYTAPTLIRALMAEGKQHFDQFDGSTLRIMGSVGEPINPEAWRWYHEVIGHEHCPIVDTWWQTETGGILITPLPGATDTKPGSATRPFFGVQPALVDNMGNILEGENEGNLVLLDSWPGQMRTVYGDHERFVLTYFKTFRGMYFTGDGARRDEDGYYWITGRVDDVINVSGHRLGTAEVESALVSHELVAEAAVVGYPHDIKGQGIYAYVTLTRGTEESEELRQELRQWVRKEIGALATPDLIQWASGLPKTRSGKIMRRFLRKIAANEVTNLGDASTLADPAVIETLIETRLNRTE.

CoA is bound by residues 191–194 (RGGR), Thr311, and Asn335. Residues 387 to 389 (GEP), 411 to 416 (DTWWQT), Asp500, and Arg515 each bind ATP. Position 523 (Ser523) interacts with CoA. Arg526 serves as a coordination point for ATP. Residues Val537, His539, and Val542 each contribute to the Mg(2+) site. Arg584 contacts CoA. Lys609 carries the N6-acetyllysine modification.

It belongs to the ATP-dependent AMP-binding enzyme family. Requires Mg(2+) as cofactor. In terms of processing, acetylated. Deacetylation by the SIR2-homolog deacetylase activates the enzyme.

The catalysed reaction is acetate + ATP + CoA = acetyl-CoA + AMP + diphosphate. Catalyzes the conversion of acetate into acetyl-CoA (AcCoA), an essential intermediate at the junction of anabolic and catabolic pathways. AcsA undergoes a two-step reaction. In the first half reaction, AcsA combines acetate with ATP to form acetyl-adenylate (AcAMP) intermediate. In the second half reaction, it can then transfer the acetyl group from AcAMP to the sulfhydryl group of CoA, forming the product AcCoA. The sequence is that of Acetyl-coenzyme A synthetase from Shewanella sp. (strain W3-18-1).